We begin with the raw amino-acid sequence, 416 residues long: Lysosome-associated membrane glycoprotein 3 (416 aa).

The N-terminal stretch at 1–27 (MPRQLSAAAVLFASLAVILHDGSQMRA) is a signal peptide. Residues 28–381 (KAFPKTRDYS…NVDECSSDYT (354 aa)) are Lumenal-facing. Residues 135 to 217 (PPTITPPAHT…ASTVPGSTLA (83 aa)) are disordered. The segment covering 142–170 (AHTTGTSSSTVNHTTGNATQPSNQTTLPA) has biased composition (polar residues). Residues 188-208 (PTHAPGTTAAAHNTTRTAAPA) show a composition bias toward low complexity. A glycan (N-linked (GlcNAc...) asparagine) is linked at Asn-200. Cys-237 and Cys-274 form a disulfide bridge. Residue Asn-291 is glycosylated (N-linked (GlcNAc...) asparagine). Cysteines 339 and 376 form a disulfide. Residues 382 to 402 (IVLPVIGAIVVGLCLVGMGVY) traverse the membrane as a helical segment. Over 403–416 (KIRLRCQSSGYQRI) the chain is Cytoplasmic.

It belongs to the LAMP family. In terms of assembly, monomer. Interacts with FURIN.

It localises to the cell surface. The protein resides in the lysosome membrane. Its subcellular location is the cytoplasmic vesicle membrane. The protein localises to the early endosome membrane. In terms of biological role, lysosomal membrane glycoprotein which plays a role in the unfolded protein response (UPR) that contributes to protein degradation and cell survival during proteasomal dysfunction. Plays a role in the process of fusion of the lysosome with the autophagosome, thereby modulating the autophagic process. Promotes hepatocellular lipogenesis through activation of the PI3K/Akt pathway. May also play a role in dendritic cell function and in adaptive immunity. In Macaca mulatta (Rhesus macaque), this protein is Lysosome-associated membrane glycoprotein 3 (LAMP3).